A 342-amino-acid chain; its full sequence is Dihydroorotase (342 aa).

Residues His13 and His15 each coordinate Zn(2+). Residues 15–17 (HLR) and Asn41 each bind substrate. Zn(2+) contacts are provided by Lys97, His134, and His172. The residue at position 97 (Lys97) is an N6-carboxylysine. His134 lines the substrate pocket. A substrate-binding site is contributed by Leu217. Asp245 serves as a coordination point for Zn(2+). The active site involves Asp245. Positions 249 and 261 each coordinate substrate.

It belongs to the metallo-dependent hydrolases superfamily. DHOase family. Class II DHOase subfamily. As to quaternary structure, homodimer. The cofactor is Zn(2+).

It carries out the reaction (S)-dihydroorotate + H2O = N-carbamoyl-L-aspartate + H(+). It functions in the pathway pyrimidine metabolism; UMP biosynthesis via de novo pathway; (S)-dihydroorotate from bicarbonate: step 3/3. Its function is as follows. Catalyzes the reversible cyclization of carbamoyl aspartate to dihydroorotate. This is Dihydroorotase from Shewanella amazonensis (strain ATCC BAA-1098 / SB2B).